The primary structure comprises 371 residues: Queuine tRNA-ribosyltransferase (371 aa).

The Proton acceptor role is filled by Asp-90. Substrate-binding positions include 90–94 (DSGGF), Asp-144, Gln-188, and Gly-215. Residues 246-252 (GVGTPED) form an RNA binding region. The active-site Nucleophile is Asp-265. The RNA binding; important for wobble base 34 recognition stretch occupies residues 270-274 (TRNAR). Cys-303, Cys-305, Cys-308, and His-334 together coordinate Zn(2+).

Belongs to the queuine tRNA-ribosyltransferase family. As to quaternary structure, homodimer. Within each dimer, one monomer is responsible for RNA recognition and catalysis, while the other monomer binds to the replacement base PreQ1. Zn(2+) is required as a cofactor.

The enzyme catalyses 7-aminomethyl-7-carbaguanine + guanosine(34) in tRNA = 7-aminomethyl-7-carbaguanosine(34) in tRNA + guanine. Its pathway is tRNA modification; tRNA-queuosine biosynthesis. Its function is as follows. Catalyzes the base-exchange of a guanine (G) residue with the queuine precursor 7-aminomethyl-7-deazaguanine (PreQ1) at position 34 (anticodon wobble position) in tRNAs with GU(N) anticodons (tRNA-Asp, -Asn, -His and -Tyr). Catalysis occurs through a double-displacement mechanism. The nucleophile active site attacks the C1' of nucleotide 34 to detach the guanine base from the RNA, forming a covalent enzyme-RNA intermediate. The proton acceptor active site deprotonates the incoming PreQ1, allowing a nucleophilic attack on the C1' of the ribose to form the product. After dissociation, two additional enzymatic reactions on the tRNA convert PreQ1 to queuine (Q), resulting in the hypermodified nucleoside queuosine (7-(((4,5-cis-dihydroxy-2-cyclopenten-1-yl)amino)methyl)-7-deazaguanosine). The polypeptide is Queuine tRNA-ribosyltransferase (Neisseria meningitidis serogroup B (strain ATCC BAA-335 / MC58)).